An 82-amino-acid chain; its full sequence is Progonadoliberin-3 (82 aa).

The N-terminal stretch at 1–23 is a signal peptide; sequence MDLSNRTVVQVVVLALVAQVTLS. A Pyrrolidone carboxylic acid modification is found at glutamine 24. Residue glycine 33 is modified to Glycine amide.

Belongs to the GnRH family. As to expression, brain.

The protein resides in the secreted. Functionally, stimulates the secretion of gonadotropins. The polypeptide is Progonadoliberin-3 (gnrh3) (Oncorhynchus nerka (Sockeye salmon)).